The sequence spans 707 residues: Ribosomal RNA large subunit methyltransferase K/L (707 aa).

The 112-residue stretch at 43-154 (QIYRCCLWSR…KDKAILGVDM (112 aa)) folds into the THUMP domain.

Belongs to the methyltransferase superfamily. RlmKL family.

The protein resides in the cytoplasm. The enzyme catalyses guanosine(2445) in 23S rRNA + S-adenosyl-L-methionine = N(2)-methylguanosine(2445) in 23S rRNA + S-adenosyl-L-homocysteine + H(+). It catalyses the reaction guanosine(2069) in 23S rRNA + S-adenosyl-L-methionine = N(2)-methylguanosine(2069) in 23S rRNA + S-adenosyl-L-homocysteine + H(+). Functionally, specifically methylates the guanine in position 2445 (m2G2445) and the guanine in position 2069 (m7G2069) of 23S rRNA. This chain is Ribosomal RNA large subunit methyltransferase K/L, found in Vibrio campbellii (strain ATCC BAA-1116).